The following is a 501-amino-acid chain: MEVMQLSFSYPALFLFVFFLFMLVKQLRRPKNLPPGPNKLPIIGNLHQLATELPHHTLKQLADKYGPIMHLQFGEVSAIIVSSAKLAKVFLGNHGLAVADRPKTMVATIMLYNSSGVTFAPYGDYWKHLRQVYAVELLSPKSVRSFSMIMDEEISLMLKRIQSNAAGQPLKVHDEMMTYLFATLCRTSIGSVCKGRDLLIDTAKDISAISAAIRIEELFPSLKILPYITGLHRQLGKLSKRLDGILEDIIAQREKMQESSTGDNDERDILGVLLKLKRSNSNDTKVRIRNDDIKAIVFELILAGTLSTAATVEWCLSELKKNPGAMKKAQDEVRQVMKGETICTNDVQKLEYIRMVIKETFRMHPPAPLLFPRECREPIQVEGYTIPEKSWLIVNYWAVGRDPELWNDPEKFEPERFRNSPVDMSGNHYELIPFGAGRRICPGISFAATNAELLLASLIYHFDWKLPAGVKELDMDELFGAGCVRKNPLHLIPKTVVPCQD.

The helical; Signal-anchor for type II membrane protein transmembrane segment at 3 to 23 (VMQLSFSYPALFLFVFFLFML) threads the bilayer. Cysteine 441 provides a ligand contact to heme.

Belongs to the cytochrome P450 family. It depends on heme as a cofactor. Highly expressed in roots. Expressed at low levels in stems.

The protein localises to the endoplasmic reticulum membrane. The catalysed reaction is (19E)-geissoschizine + reduced [NADPH--hemoprotein reductase] + O2 = polyneuridine aldehyde + oxidized [NADPH--hemoprotein reductase] + 2 H2O + H(+). The enzyme catalyses tetrahydroalstonine + A + reduced [NADPH--hemoprotein reductase] + O2 = alstonine + AH2 + oxidized [NADPH--hemoprotein reductase] + 2 H2O + H(+). It carries out the reaction ajmalicine + A + reduced [NADPH--hemoprotein reductase] + O2 = serpentine + AH2 + oxidized [NADPH--hemoprotein reductase] + 2 H2O + H(+). The protein operates within alkaloid biosynthesis; ajmaline biosynthesis. In terms of biological role, monooxygenase involved in the biosynthesis of ajmaline-type monoterpenoid indole alkaloids (MIAs) natural products, important plant-derived pharmaceuticals used in the therapy of heart disorders. Converts by cyclization the strictosidine-derived geissoschizine to the sarpagan alkaloid polyneuridine aldehyde, precursor of vomilenine, an intermediate chemical in the biosynthesis of ajmaline. Converts by aromatization the tetrahydro-beta-carboline alkaloids tetrahydroalstonine and ajmalicine to the corresponding beta-carboline alkaloids alstonine and serpentine, respectively. In Gelsemium sempervirens (Carolina jasmine), this protein is Sarpagan bridge enzyme.